Here is a 473-residue protein sequence, read N- to C-terminus: MKTLYSPRRFYPVETLFNGTLTLAGRDQETTGFAWWAGNARLINLSGKLLGAHVAHAGLIVFWAGAMNLFEVAHFIPEKPMYEQGLILLPHLATLGWGVGPGGEIVDTFPYFVSGILHLISSAVLGFGGIYHALIGPETLEESFPFFGYAWKDRNKMTTILGIHLILLGAGAFLLVLKALFFGGIYDTWAPGGGDVRKITNLTLSPNTIFGFLLKSPFGGEGWIVSVDNLEDIIGGHFWLGSMCIFGGIWHILTKPFAWTRRAFVWSGEAYLSYSLAALSVFGFIACCFVWFNNTAYPSEFYGPTGPEASQAQAFTFLVRDQRLGASVGSAQGPTGLGKYLMRSPTGEIIFGGETMRFWDLRAPWLEPLRGPNGLDLSKLKKDIQPWQERRSAEYMTHAPLGSLNSVGGVATEINAVNFVSPRSWLATSHFVLGFFFFVGHLWHAGRARAAAAGFEKGIDRDLEPVLFMTPLN.

The propeptide occupies 1-14 (MKTLYSPRRFYPVE). Threonine 15 is subject to N-acetylthreonine. Position 15 is a phosphothreonine (threonine 15). The next 5 helical transmembrane spans lie at 69 to 93 (LFEVAHFIPEKPMYEQGLILLPHLA), 134 to 155 (LIGPETLEESFPFFGYAWKDRN), 178 to 200 (KALFFGGIYDTWAPGGGDVRKIT), 255 to 275 (KPFAWTRRAFVWSGEAYLSYS), and 291 to 312 (WFNNTAYPSEFYGPTGPEASQA). Glutamate 367 is a [CaMn4O5] cluster binding site. A helical transmembrane segment spans residues 447 to 471 (RARAAAAGFEKGIDRDLEPVLFMTP).

The protein belongs to the PsbB/PsbC family. PsbC subfamily. PSII is composed of 1 copy each of membrane proteins PsbA, PsbB, PsbC, PsbD, PsbE, PsbF, PsbH, PsbI, PsbJ, PsbK, PsbL, PsbM, PsbT, PsbX, PsbY, PsbZ, Psb30/Ycf12, at least 3 peripheral proteins of the oxygen-evolving complex and a large number of cofactors. It forms dimeric complexes. Binds multiple chlorophylls and provides some of the ligands for the Ca-4Mn-5O cluster of the oxygen-evolving complex. It may also provide a ligand for a Cl- that is required for oxygen evolution. PSII binds additional chlorophylls, carotenoids and specific lipids. serves as cofactor.

Its subcellular location is the plastid. It localises to the chloroplast thylakoid membrane. One of the components of the core complex of photosystem II (PSII). It binds chlorophyll and helps catalyze the primary light-induced photochemical processes of PSII. PSII is a light-driven water:plastoquinone oxidoreductase, using light energy to abstract electrons from H(2)O, generating O(2) and a proton gradient subsequently used for ATP formation. The sequence is that of Photosystem II CP43 reaction center protein from Welwitschia mirabilis (Tree tumbo).